A 60-amino-acid chain; its full sequence is Short neurotoxin C (60 aa).

4 cysteine pairs are disulfide-bonded: C3–C22, C17–C39, C41–C52, and C53–C58.

It belongs to the three-finger toxin family. Short-chain subfamily. Type I alpha-neurotoxin sub-subfamily. In terms of tissue distribution, expressed by the venom gland.

The protein localises to the secreted. Binds to muscle nicotinic acetylcholine receptor (nAChR) and inhibit acetylcholine from binding to the receptor, thereby impairing neuromuscular transmission. This chain is Short neurotoxin C, found in Aipysurus laevis (Olive sea snake).